The chain runs to 362 residues: Abnormal cell migration protein 13 (362 aa).

The signal sequence occupies residues 1–20 (MTKLLIALILFSICWKPYSA). Topologically, residues 21–237 (EPIASFFDGL…ELDPLTTVSG (217 aa)) are extracellular. Disulfide bonds link Cys36–Cys68 and Cys98–Cys136. Positions 36-175 (CKARLDRRLT…KGFKLHWGSF (140 aa)) constitute a CUB domain. N-linked (GlcNAc...) asparagine glycosylation is present at Asn63. 2 N-linked (GlcNAc...) asparagine glycosylation sites follow: Asn145 and Asn161. Residues 182–225 (NCVTGEFSCGNGECIPIESACDRFADCSNGEDLIHSRQMAANCQ) form the LDL-receptor class A domain. 3 disulfides stabilise this stretch: Cys183-Cys195, Cys190-Cys208, and Cys202-Cys224. The chain crosses the membrane as a helical span at residues 238–258 (VFVLLFSATIILSLCGFIMFV). The Cytoplasmic segment spans residues 259 to 362 (CCLCKCLKST…VRNDVHRNLL (104 aa)). Residues 275–311 (SSHTTTTTATDYKPDPPQFYPPSPPKMPPPSAASSYT) form a disordered region. Residues 289–305 (DPPQFYPPSPPKMPPPS) are compositionally biased toward pro residues.

In terms of assembly, interacts with abl-1 (via SH2 and SH3 domains); the interaction is direct. Interacts with sem-5; the interaction is direct. Expressed in pharyngeal-intestinal valve cells and ventral cord neurons.

It is found in the cell membrane. The protein localises to the perikaryon. It localises to the cell projection. The protein resides in the axon. Its subcellular location is the dendrite. Its function is as follows. Probable receptor that acts as an upstream signaling protein to promote the guidance, migration and positioning of the right Q neuroblast (QR) and its descendants along the anteroposterior body axis, and also the anterior migration of BDU interneurons during larval development. Associates with and recruits the downstream components tyrosine kinase abl-1 and the tyrosine kinase adapter protein sem-5 to the leading edge of migrating Q neuroblasts and their descendants to activate signaling through the two parallel wve-1 and wsp-1 pathways, respectively, and direct migration along the anteroposterior body axis. Involved in cytoskeleton dynamics regulating the organization of the actin cytoskeleton at the leading edge of migrating cells to ensure correct Q cell polarity and promote migration. Role in cytoskeleton organization may be by activation of the wve-1 and wsp-1 pathways which recruit the Arp2/3 complex to the leading edge of migrating cells. Plays a role in regulating the asymmetric distribution of the actin cytoskeleton-binding protein cor-1 in Q neuroblasts which is required for the anterior migration of QR neuroblasts. In Caenorhabditis elegans, this protein is Abnormal cell migration protein 13.